Here is a 314-residue protein sequence, read N- to C-terminus: 2,3-dihydroxyphenylpropionate/2,3-dihydroxicinnamic acid 1,2-dioxygenase (314 aa).

Residue His-115 is the Proton donor of the active site. The active-site Proton acceptor is His-179.

This sequence belongs to the LigB/MhpB extradiol dioxygenase family. In terms of assembly, homotetramer. It depends on Fe(2+) as a cofactor.

It catalyses the reaction 3-(2,3-dihydroxyphenyl)propanoate + O2 = (2Z,4E)-2-hydroxy-6-oxonona-2,4-dienedioate + H(+). It carries out the reaction (2E)-3-(2,3-dihydroxyphenyl)prop-2-enoate + O2 = (2Z,4E,7E)-2-hydroxy-6-oxonona-2,4,7-trienedioate + H(+). Its pathway is aromatic compound metabolism; 3-phenylpropanoate degradation. Functionally, catalyzes the non-heme iron(II)-dependent oxidative cleavage of 2,3-dihydroxyphenylpropionic acid and 2,3-dihydroxicinnamic acid into 2-hydroxy-6-ketononadienedioate and 2-hydroxy-6-ketononatrienedioate, respectively. The sequence is that of 2,3-dihydroxyphenylpropionate/2,3-dihydroxicinnamic acid 1,2-dioxygenase from Escherichia coli (strain 55989 / EAEC).